A 190-amino-acid polypeptide reads, in one-letter code: Probable nicotinate-nucleotide adenylyltransferase (190 aa).

This sequence belongs to the NadD family.

The catalysed reaction is nicotinate beta-D-ribonucleotide + ATP + H(+) = deamido-NAD(+) + diphosphate. It functions in the pathway cofactor biosynthesis; NAD(+) biosynthesis; deamido-NAD(+) from nicotinate D-ribonucleotide: step 1/1. Functionally, catalyzes the reversible adenylation of nicotinate mononucleotide (NaMN) to nicotinic acid adenine dinucleotide (NaAD). The protein is Probable nicotinate-nucleotide adenylyltransferase of Frankia casuarinae (strain DSM 45818 / CECT 9043 / HFP020203 / CcI3).